Consider the following 507-residue polypeptide: ATP synthase subunit alpha, chloroplastic (507 aa).

Residue 170–177 (GDRQTGKT) participates in ATP binding. Phosphothreonine is present on Thr-257.

The protein belongs to the ATPase alpha/beta chains family. F-type ATPases have 2 components, CF(1) - the catalytic core - and CF(0) - the membrane proton channel. CF(1) has five subunits: alpha(3), beta(3), gamma(1), delta(1), epsilon(1). CF(0) has four main subunits: a, b, b' and c.

The protein localises to the plastid. Its subcellular location is the chloroplast thylakoid membrane. It catalyses the reaction ATP + H2O + 4 H(+)(in) = ADP + phosphate + 5 H(+)(out). In terms of biological role, produces ATP from ADP in the presence of a proton gradient across the membrane. The alpha chain is a regulatory subunit. The sequence is that of ATP synthase subunit alpha, chloroplastic from Lobularia maritima (Sweet alyssum).